Reading from the N-terminus, the 639-residue chain is Threonine--tRNA ligase (639 aa).

The TGS domain maps to 1–61; that stretch reads MATVRLPDGK…DGGGELEFVT (61 aa). The interval 239–536 is catalytic; that stretch reads DHRRLGRELG…LIEHYAGAFP (298 aa). Residues cysteine 333, histidine 384, and histidine 513 each contribute to the Zn(2+) site.

This sequence belongs to the class-II aminoacyl-tRNA synthetase family. As to quaternary structure, homodimer. Requires Zn(2+) as cofactor.

The protein localises to the cytoplasm. The enzyme catalyses tRNA(Thr) + L-threonine + ATP = L-threonyl-tRNA(Thr) + AMP + diphosphate + H(+). Functionally, catalyzes the attachment of threonine to tRNA(Thr) in a two-step reaction: L-threonine is first activated by ATP to form Thr-AMP and then transferred to the acceptor end of tRNA(Thr). Also edits incorrectly charged L-seryl-tRNA(Thr). This Rubrobacter xylanophilus (strain DSM 9941 / JCM 11954 / NBRC 16129 / PRD-1) protein is Threonine--tRNA ligase.